A 127-amino-acid chain; its full sequence is Modulator protein MzrA (127 aa).

Residues 1–9 (MQLPRVTLR) are Cytoplasmic-facing. A helical transmembrane segment spans residues 10 to 32 (QMTWTTSAIVLLGITLLLWSAFR). The Periplasmic segment spans residues 33 to 127 (HQESTLAIRA…LLRDTSHRFG (95 aa)).

This sequence belongs to the MzrA family. Interacts with EnvZ.

The protein localises to the cell inner membrane. In terms of biological role, modulates the activity of the EnvZ/OmpR two-component regulatory system, probably by directly modulating EnvZ enzymatic activity and increasing stability of phosphorylated OmpR. The chain is Modulator protein MzrA from Escherichia fergusonii (strain ATCC 35469 / DSM 13698 / CCUG 18766 / IAM 14443 / JCM 21226 / LMG 7866 / NBRC 102419 / NCTC 12128 / CDC 0568-73).